The chain runs to 215 residues: MNLIMLILALWAPVAGSMPELSLTLFDEPPPLVETEPLPPLPDVSEYRVEYSEARCVLRSGGRLEALWTLRGNLSVPTPTPRVYYQTLEGYADRVPTPVEDISESLVAKRYWLRDYRVPQRTKLVLFYFSPCHQCQTYYVECEPRCLVPWVPLWSSLEDIERLLFEDRRLMAYYALTIKSAQYTLMMVAVIQVFWGLYVKGWLHRHFPWMFSDQW.

The signal sequence occupies residues 1-17; it reads MNLIMLILALWAPVAGS. Residues 18 to 182 are Lumenal-facing; that stretch reads MPELSLTLFD…YYALTIKSAQ (165 aa). Residues 47–146 enclose the Ig-like H-type domain; sequence YRVEYSEARC…TYYVECEPRC (100 aa). Residues Cys-56 and Cys-142 are joined by a disulfide bond. A glycan (N-linked (GlcNAc...) asparagine; by host) is linked at Asn-73. The helical transmembrane segment at 183-203 threads the bilayer; that stretch reads YTLMMVAVIQVFWGLYVKGWL. Topologically, residues 204–215 are cytoplasmic; sequence HRHFPWMFSDQW.

This sequence belongs to the cytomegalovirus US6 family. In terms of assembly, interacts with host TRAM1.

It is found in the host endoplasmic reticulum membrane. Participates in the inhibition of the host immune response. Redirects newly synthesized major histocompatibility complex (MHC) class I heavy chains via the SEC61 translocon to the cytosol where they undergo proteasome-dependent destruction. In consequence, infected cells are masked for immune recognition by cytotoxic T-lymphocytes. This chain is Unique short US11 glycoprotein (US11), found in Homo sapiens (Human).